The primary structure comprises 356 residues: Vesicular integral-membrane protein VIP36 (356 aa).

Positions 1–44 are cleaved as a signal peptide; sequence MAAEGWIWRWGWGRRCLGRPGLPGPGPGPATPLFLLLLLGPVVA. The Lumenal portion of the chain corresponds to 45–322; sequence DITDGNSEHL…FRSGPLTGWR (278 aa). The 225-residue stretch at 52-276 folds into the L-type lectin-like domain; that stretch reads EHLKREHSLI…DIISMKLFQL (225 aa). Residues serine 96 and aspartate 131 each contribute to the a carbohydrate site. Ca(2+) contacts are provided by aspartate 162, tyrosine 164, and asparagine 166. 164–166 contacts a carbohydrate; it reads YPN. A glycan (N-linked (GlcNAc...) asparagine) is linked at asparagine 183. A carbohydrate is bound at residue histidine 190. Position 193 (aspartate 193) interacts with Ca(2+). Residues cysteine 202 and cysteine 239 are joined by a disulfide bond. 260–262 provides a ligand contact to a carbohydrate; it reads GDL. The helical transmembrane segment at 323-345 threads the bilayer; sequence VFLLLLCALLGIIVCAVVGAVVF. The Cytoplasmic portion of the chain corresponds to 346-356; the sequence is QKRQERNKRFY.

As to quaternary structure, monomer. Requires Ca(2+) as cofactor. As to expression, expressed in kidney, liver, intestine, lung, spleen and heart. Low expression in brain.

The protein localises to the golgi apparatus membrane. Functionally, plays a role as an intracellular lectin in the early secretory pathway. Interacts with N-acetyl-D-galactosamine and high-mannose type glycans and may also bind to O-linked glycans. Involved in the transport and sorting of glycoproteins carrying high mannose-type glycans. This Canis lupus familiaris (Dog) protein is Vesicular integral-membrane protein VIP36 (LMAN2).